Reading from the N-terminus, the 278-residue chain is Large ribosomal subunit protein uL2 (278 aa).

Composition is skewed to basic residues over residues 210 to 220 (GRMRWKGKRPS) and 257 to 278 (TRRK…NKKR). The disordered stretch occupies residues 210–278 (GRMRWKGKRP…VRRRKSNKKR (69 aa)).

Belongs to the universal ribosomal protein uL2 family. Part of the 50S ribosomal subunit. Forms a bridge to the 30S subunit in the 70S ribosome.

Its function is as follows. One of the primary rRNA binding proteins. Required for association of the 30S and 50S subunits to form the 70S ribosome, for tRNA binding and peptide bond formation. It has been suggested to have peptidyltransferase activity; this is somewhat controversial. Makes several contacts with the 16S rRNA in the 70S ribosome. This is Large ribosomal subunit protein uL2 from Acidothermus cellulolyticus (strain ATCC 43068 / DSM 8971 / 11B).